The sequence spans 382 residues: Putative acetyl-CoA C-acetyltransferase VraB (382 aa).

Cysteine 86 (acyl-thioester intermediate) is an active-site residue. Histidine 338 (proton acceptor) is an active-site residue.

Belongs to the thiolase-like superfamily. Thiolase family.

This chain is Putative acetyl-CoA C-acetyltransferase VraB (vraB), found in Staphylococcus epidermidis (strain ATCC 12228 / FDA PCI 1200).